The primary structure comprises 727 residues: 1,4-alpha-glucan branching enzyme GlgB (727 aa).

Asp-405 serves as the catalytic Nucleophile. The active-site Proton donor is Glu-458.

The protein belongs to the glycosyl hydrolase 13 family. GlgB subfamily. As to quaternary structure, monomer.

The enzyme catalyses Transfers a segment of a (1-&gt;4)-alpha-D-glucan chain to a primary hydroxy group in a similar glucan chain.. Its pathway is glycan biosynthesis; glycogen biosynthesis. Its function is as follows. Catalyzes the formation of the alpha-1,6-glucosidic linkages in glycogen by scission of a 1,4-alpha-linked oligosaccharide from growing alpha-1,4-glucan chains and the subsequent attachment of the oligosaccharide to the alpha-1,6 position. The polypeptide is 1,4-alpha-glucan branching enzyme GlgB (Yersinia enterocolitica serotype O:8 / biotype 1B (strain NCTC 13174 / 8081)).